A 458-amino-acid polypeptide reads, in one-letter code: tRNA modification GTPase MnmE (458 aa).

(6S)-5-formyl-5,6,7,8-tetrahydrofolate-binding residues include arginine 28, glutamate 85, and lysine 124. Residues 220–381 (GMNVVIAGRP…LKEHLKAVMG (162 aa)) form the TrmE-type G domain. Asparagine 230 provides a ligand contact to K(+). GTP is bound by residues 230–235 (NAGKSS), 249–255 (TDIEGTT), and 274–277 (DTAG). Serine 234 contacts Mg(2+). 3 residues coordinate K(+): threonine 249, isoleucine 251, and threonine 254. Threonine 255 is a Mg(2+) binding site. (6S)-5-formyl-5,6,7,8-tetrahydrofolate is bound at residue lysine 458.

This sequence belongs to the TRAFAC class TrmE-Era-EngA-EngB-Septin-like GTPase superfamily. TrmE GTPase family. Homodimer. Heterotetramer of two MnmE and two MnmG subunits. Requires K(+) as cofactor.

Its subcellular location is the cytoplasm. In terms of biological role, exhibits a very high intrinsic GTPase hydrolysis rate. Involved in the addition of a carboxymethylaminomethyl (cmnm) group at the wobble position (U34) of certain tRNAs, forming tRNA-cmnm(5)s(2)U34. The sequence is that of tRNA modification GTPase MnmE from Chromohalobacter salexigens (strain ATCC BAA-138 / DSM 3043 / CIP 106854 / NCIMB 13768 / 1H11).